Here is a 794-residue protein sequence, read N- to C-terminus: Phenylalanine--tRNA ligase beta subunit (794 aa).

The 116-residue stretch at 39-154 folds into the tRNA-binding domain; that stretch reads SSSFSSIITA…ANTPLGESAC (116 aa). The region spanning 403–481 is the B5 domain; that stretch reads PPSPTLTLRT…QPWKIEKKKA (79 aa). The Mg(2+) site is built by D457, D463, E466, and E467. An FDX-ACB domain is found at 697–793; sequence PIYPSSFRDI…QLDDTKGTID (97 aa).

This sequence belongs to the phenylalanyl-tRNA synthetase beta subunit family. Type 1 subfamily. Tetramer of two alpha and two beta subunits. Requires Mg(2+) as cofactor.

It localises to the cytoplasm. The catalysed reaction is tRNA(Phe) + L-phenylalanine + ATP = L-phenylalanyl-tRNA(Phe) + AMP + diphosphate + H(+). This Chlamydia abortus (strain DSM 27085 / S26/3) (Chlamydophila abortus) protein is Phenylalanine--tRNA ligase beta subunit.